Consider the following 24-residue polypeptide: Cupiennin-5a (24 aa).

As to expression, expressed by the venom gland.

The protein localises to the secreted. In Cupiennius salei (American wandering spider), this protein is Cupiennin-5a.